The primary structure comprises 448 residues: Protein chibby homolog 2 (448 aa).

Phosphoserine occurs at positions 41, 86, 89, 97, 124, 144, 148, and 150. A coiled-coil region spans residues 163 to 198 (AKEFVLQEENKSLREENKALREENRMLRKENKILQV). Positions 206 to 226 (SLGREESRPPSPLPQKDSASL) are disordered. Phosphoserine is present on residues Ser-212 and Ser-225. A coiled-coil region spans residues 242–267 (KEDSTLQLLREENRALQQLLEQKQAY). Positions 270 to 321 (QTEDAAAPAEESKPAPSPHEEPCSPGLLQDQGSGLSSHFEEPRGPPAPQEDS) are disordered. Over residues 279–291 (EESKPAPSPHEEP) the composition is skewed to basic and acidic residues. Ser-335 and Ser-338 each carry phosphoserine. Residues 356–414 (LQLLREMRQALQALLKENRLLQEENRTLQVLRAEHRGFQEENKALWENNKLKLQQKLVI) adopt a coiled-coil conformation.

The protein belongs to the chibby family. SPERT subfamily. As to quaternary structure, homodimer. Binds to NEK1.

This Macaca fascicularis (Crab-eating macaque) protein is Protein chibby homolog 2 (CBY2).